Consider the following 223-residue polypeptide: 7-cyano-7-deazaguanine synthase (223 aa).

15-25 (FSGGQDSTTCL) contributes to the ATP binding site. 4 residues coordinate Zn(2+): Cys-191, Cys-200, Cys-203, and Cys-206.

It belongs to the QueC family. Homodimer. The cofactor is Zn(2+).

It catalyses the reaction 7-carboxy-7-deazaguanine + NH4(+) + ATP = 7-cyano-7-deazaguanine + ADP + phosphate + H2O + H(+). It functions in the pathway purine metabolism; 7-cyano-7-deazaguanine biosynthesis. Its function is as follows. Catalyzes the ATP-dependent conversion of 7-carboxy-7-deazaguanine (CDG) to 7-cyano-7-deazaguanine (preQ(0)). The sequence is that of 7-cyano-7-deazaguanine synthase from Staphylococcus epidermidis (strain ATCC 35984 / DSM 28319 / BCRC 17069 / CCUG 31568 / BM 3577 / RP62A).